Here is a 66-residue protein sequence, read N- to C-terminus: Large ribosomal subunit protein uL29 (66 aa).

This sequence belongs to the universal ribosomal protein uL29 family.

The chain is Large ribosomal subunit protein uL29 from Thermococcus gammatolerans (strain DSM 15229 / JCM 11827 / EJ3).